The sequence spans 466 residues: Ribulose bisphosphate carboxylase large chain (466 aa).

Position 5 is an N6,N6,N6-trimethyllysine (K5). N114 and T164 together coordinate substrate. K166 functions as the Proton acceptor in the catalytic mechanism. Position 168 (K168) interacts with substrate. Residues K192, D194, and E195 each contribute to the Mg(2+) site. K192 is modified (N6-carboxylysine). The active-site Proton acceptor is H285. Substrate-binding residues include R286, H318, and S370.

Belongs to the RuBisCO large chain family. Type I subfamily. Heterohexadecamer of 8 large chains and 8 small chains; disulfide-linked. The disulfide link is formed within the large subunit homodimers. Mg(2+) serves as cofactor. The disulfide bond which can form in the large chain dimeric partners within the hexadecamer appears to be associated with oxidative stress and protein turnover.

Its subcellular location is the plastid. It is found in the chloroplast. The enzyme catalyses 2 (2R)-3-phosphoglycerate + 2 H(+) = D-ribulose 1,5-bisphosphate + CO2 + H2O. It catalyses the reaction D-ribulose 1,5-bisphosphate + O2 = 2-phosphoglycolate + (2R)-3-phosphoglycerate + 2 H(+). In terms of biological role, ruBisCO catalyzes two reactions: the carboxylation of D-ribulose 1,5-bisphosphate, the primary event in carbon dioxide fixation, as well as the oxidative fragmentation of the pentose substrate in the photorespiration process. Both reactions occur simultaneously and in competition at the same active site. The sequence is that of Ribulose bisphosphate carboxylase large chain from Eremothamnus marlothianus.